A 393-amino-acid chain; its full sequence is Homoserine O-succinyltransferase (393 aa).

The region spanning 62–372 (NAVLVCHALN…PHGHDAFLLD (311 aa)) is the AB hydrolase-1 domain. The active-site Nucleophile is Ser168. Arg238 is a binding site for substrate. Residues Asp333 and His366 contribute to the active site. Asp367 is a substrate binding site.

It belongs to the AB hydrolase superfamily. MetX family. As to quaternary structure, homodimer.

The protein resides in the cytoplasm. It carries out the reaction L-homoserine + succinyl-CoA = O-succinyl-L-homoserine + CoA. Its pathway is amino-acid biosynthesis; L-methionine biosynthesis via de novo pathway; O-succinyl-L-homoserine from L-homoserine: step 1/1. In terms of biological role, transfers a succinyl group from succinyl-CoA to L-homoserine, forming succinyl-L-homoserine. The polypeptide is Homoserine O-succinyltransferase (Cupriavidus taiwanensis (strain DSM 17343 / BCRC 17206 / CCUG 44338 / CIP 107171 / LMG 19424 / R1) (Ralstonia taiwanensis (strain LMG 19424))).